Consider the following 171-residue polypeptide: Adenine phosphoribosyltransferase (171 aa).

It belongs to the purine/pyrimidine phosphoribosyltransferase family. Homodimer.

It is found in the cytoplasm. The catalysed reaction is AMP + diphosphate = 5-phospho-alpha-D-ribose 1-diphosphate + adenine. It participates in purine metabolism; AMP biosynthesis via salvage pathway; AMP from adenine: step 1/1. Catalyzes a salvage reaction resulting in the formation of AMP, that is energically less costly than de novo synthesis. The chain is Adenine phosphoribosyltransferase from Pelotomaculum thermopropionicum (strain DSM 13744 / JCM 10971 / SI).